Consider the following 33-residue polypeptide: uncharacterized protein (33 aa).

This is an uncharacterized protein from Staphylococcus aureus (strain N315).